Consider the following 1863-residue polypeptide: Calcineurin-binding protein 1 (1863 aa).

TPR repeat units follow at residues 30 to 65 (LSQT…ITNS), 81 to 116 (FLAL…DAKD), and 118 to 150 (VLWN…SPNN). A disordered region spans residues 315 to 361 (ERESGGSVKEKEPVFSEEHPQERRSTRLERLRNQKPEKEGLEFDNSK). 12 TPR repeats span residues 543–576 (ARYF…LGRE), 602–637 (IHEI…LAPL), 866–900 (INSP…EKNE), 955–988 (QCFF…DYQT), 990–1009 (EQCV…SSRT), 1011–1031 (LVKL…PPDD), 1143–1183 (FESW…SQRV), 1226–1263 (VPFY…RQDW), 1264–1297 (SHAF…NPSA), 1306–1339 (ASRL…KDTA), 1377–1412 (EGVW…LAQG), and 1508–1541 (NSLR…SMSR). Positions 894–923 (VHVEKNENNKTESKKDGSEEQVGYREKEQS) are enriched in basic and acidic residues. The disordered stretch occupies residues 894–941 (VHVEKNENNKTESKKDGSEEQVGYREKEQSEQQSKQIPEHTEEVAEEE). Residues 1813-1840 (KMKRGASTSSVVPSVQSGGTSEPEPAPK) form a disordered region. Residues 1818-1832 (ASTSSVVPSVQSGGT) show a composition bias toward polar residues.

As to quaternary structure, component of the HIRA complex made of UBN1, UBN2, ASF1A, CABIN1 and HIRA. In terms of tissue distribution, expressed at low levels in seedlings.

It localises to the nucleus. In terms of biological role, may be required for replication-independent chromatin assembly. The chain is Calcineurin-binding protein 1 from Arabidopsis thaliana (Mouse-ear cress).